Here is a 190-residue protein sequence, read N- to C-terminus: Probable GTP-binding protein EngB (190 aa).

An EngB-type G domain is found at 22 to 190 (VKREVAFAGR…LNELLKILIP (169 aa)). Residues 30 to 37 (GRSNVGKS), 56 to 60 (GKTRS), 74 to 77 (DLPG), 141 to 144 (TKTD), and 173 to 175 (FSA) each bind GTP. Mg(2+)-binding residues include Ser-37 and Thr-58.

It belongs to the TRAFAC class TrmE-Era-EngA-EngB-Septin-like GTPase superfamily. EngB GTPase family. It depends on Mg(2+) as a cofactor.

Necessary for normal cell division and for the maintenance of normal septation. This chain is Probable GTP-binding protein EngB, found in Kosmotoga olearia (strain ATCC BAA-1733 / DSM 21960 / TBF 19.5.1).